Here is a 67-residue protein sequence, read N- to C-terminus: DNA-directed RNA polymerase subunit omega (67 aa).

This sequence belongs to the RNA polymerase subunit omega family. The RNAP catalytic core consists of 2 alpha, 1 beta, 1 beta' and 1 omega subunit. When a sigma factor is associated with the core the holoenzyme is formed, which can initiate transcription.

The enzyme catalyses RNA(n) + a ribonucleoside 5'-triphosphate = RNA(n+1) + diphosphate. Promotes RNA polymerase assembly. Latches the N- and C-terminal regions of the beta' subunit thereby facilitating its interaction with the beta and alpha subunits. The chain is DNA-directed RNA polymerase subunit omega from Nitrosomonas eutropha (strain DSM 101675 / C91 / Nm57).